The sequence spans 804 residues: Endoplasmin (804 aa).

The N-terminal stretch at 1–21 (MRALWVLGLCCVLLTFGSVRA) is a signal peptide. The SRT pseudosubstrate motif motif lies at 42–44 (SRT). The N-linked (GlcNAc...) asparagine glycan is linked to N62. At S64 the chain carries Phosphoserine. N107 is a glycosylation site (N-linked (GlcNAc...) asparagine). Residues N107, D149, and N162 each coordinate ATP. N6-(2-hydroxyisobutyryl)lysine is present on K168. Phosphoserine is present on S172. ATP is bound at residue F199. A glycan (N-linked (GlcNAc...) asparagine) is linked at N217. Residues 288–323 (TVEEPMEEEEAAKEEKEESDDEAAVEEEEEEKKPKT) form a disordered region. Residues 289-317 (VEEPMEEEEAAKEEKEESDDEAAVEEEEE) show a composition bias toward acidic residues. A phosphoserine mark is found at S306 and S403. K404 is modified (N6-succinyllysine). N445 carries N-linked (GlcNAc...) asparagine glycosylation. S447 is subject to Phosphoserine. K479 is modified (N6-acetyllysine). N481 and N502 each carry an N-linked (GlcNAc...) asparagine glycan. K633 is modified (N6-succinyllysine). Residues 750–804 (DPDAKVEEEPEEEPEETTEDTTEDTEQDDDEEMDAGADEEEQETSETSTAEKDEL) form a disordered region. Over residues 757–793 (EEPEEEPEETTEDTTEDTEQDDDEEMDAGADEEEQET) the composition is skewed to acidic residues. A Prevents secretion from ER motif is present at residues 801 to 804 (KDEL).

The protein belongs to the heat shock protein 90 family. Homodimer; disulfide-linked. Component of an EIF2 complex at least composed of CELF1/CUGBP1, CALR, CALR3, EIF2S1, EIF2S2, HSP90B1 and HSPA5. Part of a large chaperone multiprotein complex comprising DNAJB11, HSP90B1, HSPA5, HYOU, PDIA2, PDIA4, PDIA6, PPIB, SDF2L1, UGGT1 and very small amounts of ERP29, but not, or at very low levels, CALR nor CANX. Interacts with AIMP1; regulates its retention in the endoplasmic reticulum. Hyperglycosylated form interacts with OS9; promoting its degradation by the endoplasmic reticulum associated degradation (ERAD). Interacts with CNPY3. This interaction is disrupted in the presence of ATP. Interacts with TLR4 and TLR9, but not with TLR3. Interacts with MZB1 in a calcium-dependent manner. Interacts with METTL23. Interacts with IL1B; the interaction facilitates cargo translocation into the ERGIC. Interacts with EIF2AK3. Phosphorylated by CK2. Post-translationally, N-glycosylated cotranslationally at Asn-217 by STT3A-containing OST-A complex: this glycosylation is constitutive. In response to various stress, 5 additional facultative sites (Asn-62, Asn-107, Asn-445, Asn-481 and Asn-502) can be glycosylated post-translationally by STT3B-containing OST-B complex, leading to a hyperglycosylated form that is degraded by the ER-associated degradation (ERAD) pathway. In normal conditions, the OST-A complex together with CCDC134 prevent glycosylation at facultative sites during protein folding, thereby preventing hyperglycosylation. Mechanistically, nascent HSP90B1 is tethered during translation to a specialized CCDC134-containing translocon that forms a microenvironment for its folding, in which STT3A associates with the SRT pseudosubstrate motif, and prevents access to facultative glycosylation sites until folding is completed, rendering its facultative sites inaccessible to the OST-B complex.

Its subcellular location is the endoplasmic reticulum lumen. It localises to the sarcoplasmic reticulum lumen. The protein localises to the melanosome. It catalyses the reaction ATP + H2O = ADP + phosphate + H(+). Functionally, ATP-dependent chaperone involved in the processing of proteins in the endoplasmic reticulum, regulating their transport. Together with MESD, acts as a modulator of the Wnt pathway by promoting the folding of LRP6, a coreceptor of the canonical Wnt pathway. When associated with CNPY3, required for proper folding of Toll-like receptors. Promotes folding and trafficking of TLR4 to the cell surface. May participate in the unfolding of cytosolic leaderless cargos (lacking the secretion signal sequence) such as the interleukin 1/IL-1 to facilitate their translocation into the ERGIC (endoplasmic reticulum-Golgi intermediate compartment) and secretion; the translocation process is mediated by the cargo receptor TMED10. The sequence is that of Endoplasmin (HSP90B1) from Sus scrofa (Pig).